Here is a 342-residue protein sequence, read N- to C-terminus: tRNA-specific 2-thiouridylase MnmA (342 aa).

Residues 6 to 13 and L32 each bind ATP; that span reads LLSGGVDS. C92 functions as the Nucleophile in the catalytic mechanism. A disulfide bridge links C92 with C191. An ATP-binding site is contributed by G116. The segment at 138–140 is interaction with tRNA; the sequence is KDQ. Catalysis depends on C191, which acts as the Cysteine persulfide intermediate. The interval 293 to 294 is interaction with tRNA; the sequence is RY.

It belongs to the MnmA/TRMU family.

Its subcellular location is the cytoplasm. It carries out the reaction S-sulfanyl-L-cysteinyl-[protein] + uridine(34) in tRNA + AH2 + ATP = 2-thiouridine(34) in tRNA + L-cysteinyl-[protein] + A + AMP + diphosphate + H(+). Functionally, catalyzes the 2-thiolation of uridine at the wobble position (U34) of tRNA, leading to the formation of s(2)U34. The sequence is that of tRNA-specific 2-thiouridylase MnmA from Helicobacter pylori (strain G27).